The sequence spans 227 residues: UPF0173 metal-dependent hydrolase BCE33L4354 (227 aa).

This sequence belongs to the UPF0173 family.

The sequence is that of UPF0173 metal-dependent hydrolase BCE33L4354 from Bacillus cereus (strain ZK / E33L).